The sequence spans 430 residues: UPF0597 protein DSY1109 (430 aa).

This sequence belongs to the UPF0597 family.

In Desulfitobacterium hafniense (strain Y51), this protein is UPF0597 protein DSY1109.